We begin with the raw amino-acid sequence, 303 residues long: N-acetylmuramic acid 6-phosphate etherase (303 aa).

Positions 61-224 constitute an SIS domain; sequence IVQAFQQGGR…TTASMILLGK (164 aa). Catalysis depends on Glu-89, which acts as the Proton donor. Glu-120 is a catalytic residue.

Belongs to the GCKR-like family. MurNAc-6-P etherase subfamily. As to quaternary structure, homodimer.

It catalyses the reaction N-acetyl-D-muramate 6-phosphate + H2O = N-acetyl-D-glucosamine 6-phosphate + (R)-lactate. It functions in the pathway amino-sugar metabolism; 1,6-anhydro-N-acetylmuramate degradation. Its pathway is amino-sugar metabolism; N-acetylmuramate degradation. It participates in cell wall biogenesis; peptidoglycan recycling. Specifically catalyzes the cleavage of the D-lactyl ether substituent of MurNAc 6-phosphate, producing GlcNAc 6-phosphate and D-lactate. Together with AnmK, is also required for the utilization of anhydro-N-acetylmuramic acid (anhMurNAc) either imported from the medium or derived from its own cell wall murein, and thus plays a role in cell wall recycling. The chain is N-acetylmuramic acid 6-phosphate etherase (murQ) from Haemophilus influenzae (strain ATCC 51907 / DSM 11121 / KW20 / Rd).